We begin with the raw amino-acid sequence, 610 residues long: Sodium-coupled monocarboxylate transporter 1 (610 aa).

The Extracellular portion of the chain corresponds to 1 to 9 (MDTPRGIGT). Residues 10-30 (FVVWDYVVFAGMLVISAAIGI) form a helical membrane-spanning segment. Residues 31–51 (YYAFAGGGQQTSKDFLMGGRR) lie on the Cytoplasmic side of the membrane. Residues 52 to 72 (MTAVPVALSLTASFMSAVTVL) traverse the membrane as a helical segment. The Extracellular portion of the chain corresponds to 73-83 (GTPSEVYRFGA). A helical transmembrane segment spans residues 84–104 (IFSIFAFTYFFVVVISAEVFL). At 105–132 (PVFYKLGITSTYEYLELRFNKCVRLCGT) the chain is on the cytoplasmic side. A helical transmembrane segment spans residues 133–153 (VLFIVQTILYTGIVIYAPALA). The Extracellular portion of the chain corresponds to 154–161 (LNQVTGFD). A helical membrane pass occupies residues 162 to 182 (LWGAVVATGVVCTFYCTLGGL). The Cytoplasmic segment spans residues 183 to 189 (KAVIWTD). A helical transmembrane segment spans residues 190-210 (VFQVGIMVAGFASVIIQAVVM). The Extracellular portion of the chain corresponds to 211–239 (QGGISTILNDAYDGGRLNFWNFNPNPLQR). Residues 240–260 (HTFWTIIIGGTFTWTSIYGVN) form a helical membrane-spanning segment. Residues 261–279 (QSQVQRYISCKSRFQAKLS) are Cytoplasmic-facing. A helical membrane pass occupies residues 280–300 (LYINLVGLWAILTCSVFCGLA). Residues 301–336 (LYSRYHDCDPWTAKKVSAPDQLMPYLVLDILQDYPG) lie on the Extracellular side of the membrane. The helical transmembrane segment at 337 to 359 (LPGLFVACAYSGTLSTVSSSINA) threads the bilayer. The Cytoplasmic segment spans residues 360 to 389 (LAAVTVEDLIKPYFRSLSERSLSWISQGMS). A helical transmembrane segment spans residues 390-410 (VVYGALCIGMAALASLMGALL). The Extracellular segment spans residues 411–415 (QAALS). The chain crosses the membrane as a helical span at residues 416–436 (VFGMVGGPLMGLFALGILVPF). The Cytoplasmic segment spans residues 437–439 (ANS). A helical membrane pass occupies residues 440–460 (IGALVGLMAGFAISLWVGIGA). At 461 to 518 (QIYPPLPERTLPLHLDIQGCNSTYNETNLMTTTEMPFTTSVFQIYNVQRTPLMDNWYS) the chain is on the extracellular side. An N-linked (GlcNAc...) asparagine glycan is attached at asparagine 485. A helical transmembrane segment spans residues 519–539 (LSYLYFSTVGTLVTLLVGILV). Residues 540 to 610 (SLSTGGRKQN…QSGKSNGTRL (71 aa)) lie on the Cytoplasmic side of the membrane. A disordered region spans residues 585–610 (GGTDNPAFNHIELNSDQSGKSNGTRL). Residues 596-610 (ELNSDQSGKSNGTRL) show a composition bias toward polar residues. Residues 608-610 (TRL) carry the PDZ-binding motif.

The protein belongs to the sodium:solute symporter (SSF) (TC 2.A.21) family. Interacts (via PDZ-binding motif) with PDZK1 (via PDZ domains 1 and 3); interaction increases nicotinate transport activity of SLC5A8. In terms of tissue distribution, expressed in normal thyroid, localized at the apical pole of thyroid cells facing the colloid lumen, but expression profoundly decreased in thyroid carcinomas. Expressed in normal colon but absent in colon aberrant crypt foci and colon cancers. Present in normal kidney cortex, brain, prostate, gastric mucosa and breast tissue but was significantly down-regulated in primary gliomas, gastric cancer, prostate tumors and breast tumors.

It is found in the apical cell membrane. The enzyme catalyses (S)-lactate(out) + 2 Na(+)(out) = (S)-lactate(in) + 2 Na(+)(in). It carries out the reaction propanoate(out) + 2 Na(+)(out) = propanoate(in) + 2 Na(+)(in). It catalyses the reaction pyruvate(out) + 2 Na(+)(out) = pyruvate(in) + 2 Na(+)(in). The catalysed reaction is acetate(out) + 2 Na(+)(out) = acetate(in) + 2 Na(+)(in). The enzyme catalyses butanoate(out) + 2 Na(+)(out) = butanoate(in) + 2 Na(+)(in). It carries out the reaction nicotinate(out) + 2 Na(+)(out) = nicotinate(in) + 2 Na(+)(in). It catalyses the reaction (R)-3-hydroxybutanoate(out) + 2 Na(+)(out) = (R)-3-hydroxybutanoate(in) + 2 Na(+)(in). The catalysed reaction is acetoacetate(out) + 2 Na(+)(out) = acetoacetate(in) + 2 Na(+)(in). The enzyme catalyses 4-methyl-2-oxopentanoate(out) + 2 Na(+)(out) = 4-methyl-2-oxopentanoate(in) + 2 Na(+)(in). It carries out the reaction 5-oxo-L-proline(out) + 2 Na(+)(out) = 5-oxo-L-proline(in) + 2 Na(+)(in). It catalyses the reaction iodide(out) = iodide(in). The catalysed reaction is chloride(in) = chloride(out). The enzyme catalyses nitrate(in) = nitrate(out). It carries out the reaction bromide(in) = bromide(out). Its activity is regulated as follows. Increase of iodide influx inhibited by addition of perchlorate (NaClO(4)), a competitive inhibitor of iodide uptake catalyzed by sodium iodide symporter (NIS). Cotransport of monocarboxylates and nicotinate strongly inhibited by probenecid, nonsteroid anti-inflammatory drugs (ibuprofen, fenoprofen, ketprofen, naproxen) in a Na(+)-dependent manner or by prolonged exposure to external concentrations of monocarboxylates. Acts as an electrogenic sodium (Na(+)) and chloride (Cl-)-dependent sodium-coupled solute transporter, including transport of monocarboxylates (short-chain fatty acids including L-lactate, D-lactate, pyruvate, acetate, propionate, valerate and butyrate), mocarboxylate drugs (nicotinate, benzoate, salicylate and 5-aminosalicylate) and ketone bodies (beta-D-hydroxybutyrate, acetoacetate and alpha-ketoisocaproate), with a Na(+):substrate stoichiometry of between 4:1 and 2:1. Catalyzes passive carrier mediated diffusion of iodide. Mediates iodide transport from the thyrocyte into the colloid lumen through the apical membrane. May be responsible for the absorption of D-lactate and monocarboxylate drugs from the intestinal tract. Acts as a tumor suppressor, suppressing colony formation in colon cancer, prostate cancer and glioma cell lines. May play a critical role in the entry of L-lactate and ketone bodies into neurons by a process driven by an electrochemical Na(+) gradient and hence contribute to the maintenance of the energy status and function of neurons. Mediates sodium-coupled electrogenic transport of pyroglutamate (5-oxo-L-proline). Can mediate the transport of chloride, bromide, iodide and nitrate ions when the external concentration of sodium ions is reduced. The protein is Sodium-coupled monocarboxylate transporter 1 of Homo sapiens (Human).